The sequence spans 271 residues: Signal recognition particle receptor subunit beta (271 aa).

The helical transmembrane segment at Leu37 to Ile57 threads the bilayer. Residues Gly71–Leu79 and Thr92–Ser95 each bind GTP. Ser112 carries the post-translational modification Phosphoserine. Position 120 (Gly120) interacts with GTP. Thr214 is modified (phosphothreonine). Ala248 is a GTP binding site.

This sequence belongs to the SRP receptor beta subunit family. Heterodimer with SRPRA.

It is found in the endoplasmic reticulum membrane. Its function is as follows. Component of the signal recognition particle (SRP) complex receptor (SR). Ensures, in conjunction with the SRP complex, the correct targeting of the nascent secretory proteins to the endoplasmic reticulum membrane system. May mediate the membrane association of SR. In Homo sapiens (Human), this protein is Signal recognition particle receptor subunit beta (SRPRB).